A 285-amino-acid polypeptide reads, in one-letter code: Bifunctional protein FolD (285 aa).

166–168 (GAS) is an NADP(+) binding site.

This sequence belongs to the tetrahydrofolate dehydrogenase/cyclohydrolase family. In terms of assembly, homodimer.

The catalysed reaction is (6R)-5,10-methylene-5,6,7,8-tetrahydrofolate + NADP(+) = (6R)-5,10-methenyltetrahydrofolate + NADPH. The enzyme catalyses (6R)-5,10-methenyltetrahydrofolate + H2O = (6R)-10-formyltetrahydrofolate + H(+). It functions in the pathway one-carbon metabolism; tetrahydrofolate interconversion. Its function is as follows. Catalyzes the oxidation of 5,10-methylenetetrahydrofolate to 5,10-methenyltetrahydrofolate and then the hydrolysis of 5,10-methenyltetrahydrofolate to 10-formyltetrahydrofolate. The sequence is that of Bifunctional protein FolD from Thioalkalivibrio sulfidiphilus (strain HL-EbGR7).